We begin with the raw amino-acid sequence, 159 residues long: Transcription elongation factor GreA (159 aa).

A coiled-coil region spans residues 43–76 (LSENAEYDAAREEQSQLEAKIGDLENKLASATIL).

It belongs to the GreA/GreB family.

Its function is as follows. Necessary for efficient RNA polymerase transcription elongation past template-encoded arresting sites. The arresting sites in DNA have the property of trapping a certain fraction of elongating RNA polymerases that pass through, resulting in locked ternary complexes. Cleavage of the nascent transcript by cleavage factors such as GreA or GreB allows the resumption of elongation from the new 3'terminus. GreA releases sequences of 2 to 3 nucleotides. This is Transcription elongation factor GreA from Chlorobaculum parvum (strain DSM 263 / NCIMB 8327) (Chlorobium vibrioforme subsp. thiosulfatophilum).